A 391-amino-acid chain; its full sequence is Multidrug resistance protein MdtL (391 aa).

Over 1–3 (MSR) the chain is Cytoplasmic. A helical membrane pass occupies residues 4–24 (FLICSFALVLLYPAGIDMYLV). The Periplasmic segment spans residues 25–41 (GLPRIAADLNASEAQLH). The chain crosses the membrane as a helical span at residues 42-62 (IAFSVYLAGMAAAMLFAGKVA). Residues 63 to 68 (DRSGRK) lie on the Cytoplasmic side of the membrane. The chain crosses the membrane as a helical span at residues 69-89 (PVAIPGAALFIIASVFCSLAE). At 90 to 92 (TST) the chain is on the periplasmic side. Residues 93–113 (LFLAGRFLQGLGAGCCYVVAF) traverse the membrane as a helical segment. Residues 114 to 130 (AILRDTLDDRRRAKVLS) are Cytoplasmic-facing. The helical transmembrane segment at 131-151 (LLNGITCIIPVLAPVLGHLIM) threads the bilayer. The Periplasmic portion of the chain corresponds to 152-157 (LKFPWQ). Residues 158 to 178 (SLFWTMAIMGIAVLMLSLFIL) traverse the membrane as a helical segment. At 179–198 (KETRPAAPAASDKSRENSES) the chain is on the cytoplasmic side. A helical transmembrane segment spans residues 199–221 (LLNRFFLSRVVITTLSVSVILTF). At 222–244 (VNTSPVLLMEIMGFERGEYATIM) the chain is on the periplasmic side. The helical transmembrane segment at 245 to 265 (ALTAGVSMTVSFSTPFALGIF) threads the bilayer. Over 266-268 (KPR) the chain is Cytoplasmic. A helical transmembrane segment spans residues 269 to 289 (TLMITSQVLFLAAGITLAVSP). The Periplasmic portion of the chain corresponds to 290–292 (SHA). A helical transmembrane segment spans residues 293–313 (ISLFGITLICAGFSVGFGVAM). Over 314 to 330 (SQALGPFSLRAGVASST) the chain is Cytoplasmic. The helical transmembrane segment at 331–351 (LGIAQVCGSSLWIWLAAVVGI) threads the bilayer. Residues 352–355 (GAWN) lie on the Periplasmic side of the membrane. The helical transmembrane segment at 356–376 (MLIGILIACSIVSLLLIMFVA) threads the bilayer. Over 377–391 (PGRPVAAHEEIHHHA) the chain is Cytoplasmic.

This sequence belongs to the major facilitator superfamily. DHA1 family. MdtL (TC 2.A.1.2.22) subfamily.

Its subcellular location is the cell inner membrane. In Shigella dysenteriae serotype 1 (strain Sd197), this protein is Multidrug resistance protein MdtL.